The sequence spans 1746 residues: Inactive tyrosine-protein kinase PEAK1 (1746 aa).

Positions 44–66 (KTNANHSNNHRIRNTGNFRPPVA) are disordered. S281 is subject to Phosphoserine. Disordered stretches follow at residues 334–411 (QSMV…KVPE) and 489–517 (LEGPVNSPKTKSSSSTPNSPVTSSSLTPG). A compositionally biased stretch (low complexity) spans 338-349 (SSDSTSPDSSLT). Positions 355 to 364 (ETASSLSQKI) are enriched in polar residues. The segment covering 492–513 (PVNSPKTKSSSSTPNSPVTSSS) has biased composition (low complexity). A phosphoserine mark is found at S540, S572, and S587. The interval 551–577 (ITSGTGPNVPPRKNCHKSAPTSPTATN) is disordered. Phosphotyrosine occurs at positions 635 and 641. Phosphoserine is present on S648. Y665 is subject to Phosphotyrosine. Disordered regions lie at residues 671–700 (ESKVPDNTTSKTTDCLQTKGFSNSTEHKRG), 713–764 (LNRG…EKAS), 802–920 (DADV…AADA), 1052–1102 (VTED…DPNP), and 1138–1158 (GKTDQEAPNASQPTPPPLPKK). Residues 675–694 (PDNTTSKTTDCLQTKGFSNS) show a composition bias toward polar residues. Over residues 718-730 (SSPQRSYSSSHSS) the composition is skewed to low complexity. 2 stretches are compositionally biased toward polar residues: residues 748-758 (TQESQMVGSSS) and 820-841 (LFTSQPSGEAEAPQTTDSPTTK). S826 and S854 each carry phosphoserine. A compositionally biased stretch (pro residues) spans 864–874 (SEPPAPFPPPR). Over residues 889–902 (HFTNWTKPTSPTRS) the composition is skewed to polar residues. Position 898 is a phosphoserine (S898). Composition is skewed to basic and acidic residues over residues 903 to 920 (TEAESVLHSEGSRRAADA), 1052 to 1062 (VTEDFSPRDPR), and 1084 to 1094 (ELEREDGKEDI). A Phosphothreonine modification is found at T1151. Residue Y1188 is modified to Phosphotyrosine. The required for homodimerization stretch occupies residues 1285–1311 (EVVGKIRSLHTDALKKLAVKCEDLFMA). The Protein kinase domain maps to 1313-1675 (QKDQLRFGVD…LLWGPREDLF (363 aa)). Position 1374 is a phosphoserine (S1374). Positions 1402-1456 (LLPWEDPDDPEKDEDDMEETEEDAKGETDGKNPKPCSEAASSQKENQGVMSKKQR) are disordered. Acidic residues predominate over residues 1406-1423 (EDPDDPEKDEDDMEETEE). The segment covering 1424 to 1433 (DAKGETDGKN) has biased composition (basic and acidic residues). Residues 1440 to 1450 (AASSQKENQGV) show a composition bias toward polar residues. Residues 1670–1743 (PREDLFQTFT…DSLSCIVKIL (74 aa)) are required for homodimerization.

The protein belongs to the protein kinase superfamily. In terms of assembly, homodimer. Interacts with BCAR1 and CRK. Interacts with PRAG1. Interacts (when phosphorylated at Tyr-1188) with SHC1 (via PID domain). Found in a complex with PPP1CA, PPP1CC, SHC1 and PEAK1. Interacts (when phosphorylated at Tyr-635) with tensin TNS3 (when phosphorylated on the SH2 domain); TNS3 also interacts with integrins ITGB1, ITGB3 and ITGB5 and mediates their association with PEAK1. Interacts with RASAL2 and GRB2. In terms of processing, phosphorylated on tyrosine in a CSK-dependent manner in response to adhesion to fibronectin and to EGF stimulation. Phosphorylation at Tyr-665 by a Src family kinase controls subcellular localization to focal adhesion and focal adhesion dynamics. Phosphorylation at Tyr-1188 is essential for binding to SHC1. Phosphorylation at Tyr-635 promotes interaction with tensin TNS3.

It localises to the cytoplasm. It is found in the cytoskeleton. The protein resides in the cell junction. The protein localises to the focal adhesion. Functionally, probable catalytically inactive kinase. Scaffolding protein that regulates the cytoskeleton to control cell spreading and migration by modulating focal adhesion dynamics. Acts as a scaffold for mediating EGFR signaling. The chain is Inactive tyrosine-protein kinase PEAK1 (PEAK1) from Homo sapiens (Human).